Reading from the N-terminus, the 914-residue chain is MSQSQNAIFTSPTGEENLMNSNHRDSESITDVCSNEDLPEVELVSLLEEQLPQYRLKVDTLFLYENQDWTQSPHQRQHASDALSPVLAEETFRYMILGTDRVEQMTKTYNDIDMVTHLLAERDRDLELAARIGQALLKRNHVLSEQNESLEEQLGQAFDQVNQLQHELCKKDELLRIVSIASEESETDSSCSTPLRFNESFSLSQGLLQLEMLQEKLKELEEENMALRSKACHIKTETVTYEEKEQQLVSDCVKELRETNAQMSRMTEELSGKSDELIRYQEELSSLLSQIVDLQHKLKEHVIEKEELKLHLQASKDAQRQLTMELHELQDRNMECLGMLHESQEEIKELRSRSGPTAHLYFSQSYGAFTGESLAAEIEGTMRKKLSLDEESSLFKQKAQQKRVFDTVRIANDTRGRSISFPALLPIPGSNRSSVIMTAKPFESGLQQTEDKSLLNQGSSSEEVAGSSQKMGQPGPSGDSDLATALHRLSLRRQNYLSEKQFFAEEWQRKIQVLADQKEGVSGCVTPTESLASLCTTQSEITDLSSASCLRGFMPEKLQIVKPLEGSQTLYHWQQLAQPNLGTILDPRPGVITKGFTQLPGDAIYHISDLEEDEEEGITFQVQQPLEVEEKLSTSKPVTGIFLPPITSAGGPVTVATANPGKCLSCTNSTFTFTTCRILHPSDITQVTPSSGFPSLSCGSSGSSSSNTAVNSPALSYRLSIGESITNRRDSTTTFSSTMSLAKLLQERGISAKVYHSPISENPLQPLPKSLAIPSTPPNSPSHSPCPSPLPFEPRVHLSENFLASRPAETFLQEMYGLRPSRNPPDVGQLKMNLVDRLKRLGIARVVKNPGAQENGRCQEAEIGPQKPDSAVYLNSGSSLLGGLRRNQSLPVIMGSFAAPVCTSSPKMGVLKED.

Residues 1 to 21 (MSQSQNAIFTSPTGEENLMNS) are compositionally biased toward polar residues. A disordered region spans residues 1–30 (MSQSQNAIFTSPTGEENLMNSNHRDSESIT). One can recognise an HAP1 N-terminal domain in the interval 48–353 (EEQLPQYRLK…QEEIKELRSR (306 aa)). Residues 134–354 (QALLKRNHVL…EEIKELRSRS (221 aa)) adopt a coiled-coil conformation. Residues 359–509 (HLYFSQSYGA…KQFFAEEWQR (151 aa)) form an interaction with HGS region. A Phosphoserine modification is found at S420. Disordered regions lie at residues 447–482 (QQTEDKSLLNQGSSSEEVAGSSQKMGQPGPSGDSDL) and 765–787 (QPLPKSLAIPSTPPNSPSHSPCP). The span at 454–471 (LLNQGSSSEEVAGSSQKM) shows a compositional bias: polar residues. Pro residues predominate over residues 775–787 (STPPNSPSHSPCP).

This sequence belongs to the milton family. Interacts with GABA-A receptor and O-GlcNAc transferase. Interacts with HGS. Interacts with RHOT1/Miro-1 and RHOT2/Miro-2. O-glycosylated. In terms of tissue distribution, widely expressed, with highest expression in heart.

It localises to the cytoplasm. The protein resides in the early endosome. Its subcellular location is the mitochondrion. In terms of biological role, may regulate endosome-to-lysosome trafficking of membrane cargo, including EGFR. In Homo sapiens (Human), this protein is Trafficking kinesin-binding protein 2 (TRAK2).